Here is a 456-residue protein sequence, read N- to C-terminus: E3 ubiquitin-protein ligase PUB24 (456 aa).

The U-box domain maps to 9 to 83; that stretch reads EIPNYFICPI…QHWCVENETR (75 aa).

In terms of processing, auto-ubiquitinated.

It catalyses the reaction S-ubiquitinyl-[E2 ubiquitin-conjugating enzyme]-L-cysteine + [acceptor protein]-L-lysine = [E2 ubiquitin-conjugating enzyme]-L-cysteine + N(6)-ubiquitinyl-[acceptor protein]-L-lysine.. It functions in the pathway protein modification; protein ubiquitination. E3 ubiquitin-protein ligase that acts as a negative regulator of the immunity triggered by the pathogen-associated molecular patterns (PAMPs), in association with PUB22 and PUB23. The chain is E3 ubiquitin-protein ligase PUB24 (PUB24) from Arabidopsis thaliana (Mouse-ear cress).